A 427-amino-acid chain; its full sequence is Histidinol dehydrogenase (427 aa).

3 residues coordinate NAD(+): tyrosine 125, glutamine 186, and asparagine 209. 3 residues coordinate substrate: serine 234, glutamine 256, and histidine 259. Zn(2+)-binding residues include glutamine 256 and histidine 259. Residues glutamate 325 and histidine 326 each act as proton acceptor in the active site. Positions 326, 359, 413, and 419 each coordinate substrate. Aspartate 359 contacts Zn(2+). Histidine 419 is a binding site for Zn(2+).

This sequence belongs to the histidinol dehydrogenase family. Zn(2+) is required as a cofactor.

It carries out the reaction L-histidinol + 2 NAD(+) + H2O = L-histidine + 2 NADH + 3 H(+). It functions in the pathway amino-acid biosynthesis; L-histidine biosynthesis; L-histidine from 5-phospho-alpha-D-ribose 1-diphosphate: step 9/9. Functionally, catalyzes the sequential NAD-dependent oxidations of L-histidinol to L-histidinaldehyde and then to L-histidine. The chain is Histidinol dehydrogenase from Leptospira interrogans serogroup Icterohaemorrhagiae serovar Lai (strain 56601).